Consider the following 316-residue polypeptide: Phospholipase A1 4 (316 aa).

The signal sequence occupies residues 1–4 (ADDL). A propeptide spanning residues 5 to 14 (TTLRNGTLDR) is cleaved from the precursor. Cysteines 20 and 103 form a disulfide. The Nucleophile role is filled by serine 153. Aspartate 181 acts as the Charge relay system in catalysis. 2 disulfide bridges follow: cysteine 192-cysteine 197 and cysteine 235-cysteine 240. The Charge relay system role is filled by histidine 242. 3 disulfides stabilise this stretch: cysteine 257/cysteine 284, cysteine 258/cysteine 309, and cysteine 277/cysteine 282.

This sequence belongs to the AB hydrolase superfamily. Lipase family. As to expression, expressed by the venom gland.

It localises to the secreted. The enzyme catalyses a 1,2-diacyl-sn-glycero-3-phosphocholine + H2O = a 2-acyl-sn-glycero-3-phosphocholine + a fatty acid + H(+). In terms of biological role, catalyzes the hydrolysis of phosphatidylcholine with phospholipase A1 activity. May act as an allergen and induce hemolytic activity. In Polistes dominula (European paper wasp), this protein is Phospholipase A1 4.